The chain runs to 476 residues: Adenosylhomocysteinase (476 aa).

Residues T61, D140, and E200 each contribute to the substrate site. Residue 201-203 coordinates NAD(+); that stretch reads TTT. Substrate-binding residues include K230 and D234. Residues N235, 264–269, E287, N322, 343–345, and N389 each bind NAD(+); these read GYGDVG and IGH.

This sequence belongs to the adenosylhomocysteinase family. The cofactor is NAD(+).

Its subcellular location is the cytoplasm. It carries out the reaction S-adenosyl-L-homocysteine + H2O = L-homocysteine + adenosine. It functions in the pathway amino-acid biosynthesis; L-homocysteine biosynthesis; L-homocysteine from S-adenosyl-L-homocysteine: step 1/1. Its function is as follows. May play a key role in the regulation of the intracellular concentration of adenosylhomocysteine. The chain is Adenosylhomocysteinase from Acidovorax sp. (strain JS42).